The following is a 764-amino-acid chain: MFSLKQPKPSFKSYLLPLQQEDKLNPETKIKKLKPVLLPGEIVVNEVNFVRKCIASDTSQYDLWGKLVCTNFKISFITENSVPFQRFHYKNLLLGEHDVPLTCIEQIVVVNDTKRKQKILSHNQKLKFNPTELIIYCKDFRILRFRFDEAGPESAKKVCLALAHYSQPTDLQLLFAFEYVAQMYHKLDKVNGIDPGGGGDFCQRTPLFESYSDWDREIKRTGASDWRVCSVNEGYMISTCLPEYFVVPSSLADQDLKQYSHAFVGRRMPLWCWNHSNGSALVRMASIKDLLQQRKIDQRVCSGITRSHPLRSEVYKCDLDDNVPSIQDIQAAFSKLRQLCVNEPFDETEEKWLSSLENTRWLEFVRMFLKQAAELVYMLDFSRRSVVLQEEEGRDLSCVVASLVQLMLDPYFRTIIGFQSLIQKEWVMSAYPFLDRCNHLKRSDKESPLFVLFLDCVWQLLQQYPAAFQFTETYLTVVHDSSRISLFGTFMFNSPHQRVQQSTEFAIGKNIQLGEEKGLKFPSVWDWSLQFSAKDRALFNNPLYIGKSVPCVQNGAVKSFKRTKKNYSSTMRGMPPSVKNGMSIQQEIMPRRNSLILKLKPEILQQVPVIPGNGFEQYFRDWFSKPADLHGVILPCLHGTHIQIWKLCYLRWTPEAQINHGGFITAFHKISLLASEIEVLQSRLRQYRAYPMATVTSPVGEQNQMFFRPDELHSSNGSLDILSSSFPFSPIGNLCRRSILGTPLSKFLNGAKIWLSTETLANED.

The Myotubularin phosphatase domain occupies 208–649 (FESYSDWDRE…THIQIWKLCY (442 aa)).

The protein belongs to the protein-tyrosine phosphatase family. Non-receptor class myotubularin subfamily.

In Xenopus laevis (African clawed frog), this protein is Myotubularin-related protein 10-B (mtmr10-b).